The following is a 398-amino-acid chain: 1-deoxy-D-xylulose 5-phosphate reductoisomerase (398 aa).

NADPH-binding residues include Thr-11, Gly-12, Ser-13, Ile-14, Arg-38, Asn-39, and Asn-125. Lys-126 is a 1-deoxy-D-xylulose 5-phosphate binding site. Residue Glu-127 participates in NADPH binding. Asp-151 provides a ligand contact to Mn(2+). Ser-152, Glu-153, Ser-179, and His-202 together coordinate 1-deoxy-D-xylulose 5-phosphate. Glu-153 contributes to the Mn(2+) binding site. Gly-208 is a binding site for NADPH. 1-deoxy-D-xylulose 5-phosphate-binding residues include Ser-215, Asn-220, Lys-221, and Glu-224. Residue Glu-224 participates in Mn(2+) binding.

This sequence belongs to the DXR family. The cofactor is Mg(2+). Mn(2+) serves as cofactor.

The catalysed reaction is 2-C-methyl-D-erythritol 4-phosphate + NADP(+) = 1-deoxy-D-xylulose 5-phosphate + NADPH + H(+). It participates in isoprenoid biosynthesis; isopentenyl diphosphate biosynthesis via DXP pathway; isopentenyl diphosphate from 1-deoxy-D-xylulose 5-phosphate: step 1/6. In terms of biological role, catalyzes the NADPH-dependent rearrangement and reduction of 1-deoxy-D-xylulose-5-phosphate (DXP) to 2-C-methyl-D-erythritol 4-phosphate (MEP). The chain is 1-deoxy-D-xylulose 5-phosphate reductoisomerase from Burkholderia mallei (strain NCTC 10247).